Here is a 501-residue protein sequence, read N- to C-terminus: Inactive cytidine monophosphate-N-acetylneuraminic acid hydroxylase (501 aa).

Belongs to the CMP-Neu5Ac hydroxylase family. In terms of tissue distribution, widely expressed. Highly expressed in thymus. Not expressed in brain. May be expressed in adult stem cells (at protein level).

The protein resides in the cytoplasm. Sialic acids are components of carbohydrate chains of glycoconjugates and are involved in cell-cell recognition and cell-pathogen interactions. That protein has no CMP-N-acetylneuraminate monooxygenase activity and is not able to convert CMP-N-acetylneuraminic acid (CMP-Neu5Ac) into its hydroxylated derivative CMP-N-glycolylneuraminic acid (CMP-Neu5Gc), a sialic acid abundantly expressed at the surface of many cells in vertebrates. However, it may play a role in Wnt signaling. The protein is Inactive cytidine monophosphate-N-acetylneuraminic acid hydroxylase (CMAHP) of Homo sapiens (Human).